The sequence spans 273 residues: Vacuolar iron transporter (273 aa).

Residues 1-47 (MGKQKIIDARKAYYEGDIEKSKEIHSHYHNLDKHAEHHSLDKDHLKT) are Cytoplasmic-facing. Residues 48–68 (IIFGSLDGIITIFAIVSGCVG) form a helical membrane-spanning segment. The Vacuolar segment spans residues 69-72 (ANIT). A helical membrane pass occupies residues 73 to 93 (PAQVIIIGVGNLFANAISMGF). The Cytoplasmic segment spans residues 94-181 (SEYTSSTAQI…NEDKSEAFKK (88 aa)). The Fe cation site is built by glutamate 113, glutamate 116, glutamate 124, glutamate 127, methionine 161, and glutamate 165. The chain crosses the membrane as a helical span at residues 182-202 (GILMFLSFCFFGMIPLFSYVL). The Vacuolar portion of the chain corresponds to 203-212 (YNLFFSAENY). Residues 213–233 (TSSFAVVFISTLITLFILGLF) traverse the membrane as a helical segment. At 234 to 246 (KSQFTTQKPIVCA) the chain is on the cytoplasmic side. The chain crosses the membrane as a helical span at residues 247 to 267 (LSMVLNGSIAGMLPFLFGVLL). The Vacuolar portion of the chain corresponds to 268–273 (KTNSGD).

This sequence belongs to the CCC1 family. In terms of assembly, monomer.

Its subcellular location is the vacuole membrane. The protein resides in the endoplasmic reticulum membrane. The enzyme catalyses Fe(2+)(in) = Fe(2+)(out). Vacuolar iron transporter involved in the transfer of iron ions from the cytosol to the vacuole for intracellular iron storage. Involved in detoxification of excess iron. The transport mechanism is not well defined and the role of protons is not clear. The polypeptide is Vacuolar iron transporter (Plasmodium berghei (strain Anka)).